Consider the following 265-residue polypeptide: Iron(3+)-hydroxamate import ATP-binding protein FhuC (265 aa).

The region spanning 12 to 248 (FALRNISFRV…ETLEMIYGIP (237 aa)) is the ABC transporter domain. ATP is bound by residues 44–51 (GHNGSGKS) and 168–179 (CLLLDEPTSALD).

This sequence belongs to the ABC transporter superfamily. Iron (Fe3+)-hydroxamate importer (TC 3.A.1.14.7) family. As to quaternary structure, the complex is composed of two ATP-binding proteins (FhuC), a transmembrane protein (FhuB) and a solute-binding protein (FhuD). FhuC interacts with FhuB.

Its subcellular location is the cell inner membrane. It catalyses the reaction ATP + H2O + Fe(3+)-hydroxamate complex-[hydroxamate-binding protein]Side 1 = ADP + phosphate + Fe(3+)-hydroxamate complexSide 2 + [hydroxamate-binding protein]Side 1.. With respect to regulation, ATPase activity is inhibited by vanadate. Its function is as follows. Part of the ABC transporter complex FhuCDB involved in iron(3+)-hydroxamate import. Responsible for energy coupling to the transport system. The polypeptide is Iron(3+)-hydroxamate import ATP-binding protein FhuC (fhuC) (Escherichia coli (strain K12)).